We begin with the raw amino-acid sequence, 171 residues long: Lipoprotein signal peptidase (171 aa).

Transmembrane regions (helical) follow at residues 15–35 (WLWL…IVMD), 47–67 (VLPF…SFLS), 72–92 (WQRW…AYWM), and 107–127 (ALII…GFVV). Residues Asp128 and Asp146 contribute to the active site. Residues 141–161 (AFNLADSTICIGAAMIILDGF) traverse the membrane as a helical segment.

It belongs to the peptidase A8 family.

It localises to the cell inner membrane. It carries out the reaction Release of signal peptides from bacterial membrane prolipoproteins. Hydrolyzes -Xaa-Yaa-Zaa-|-(S,diacylglyceryl)Cys-, in which Xaa is hydrophobic (preferably Leu), and Yaa (Ala or Ser) and Zaa (Gly or Ala) have small, neutral side chains.. Its pathway is protein modification; lipoprotein biosynthesis (signal peptide cleavage). In terms of biological role, this protein specifically catalyzes the removal of signal peptides from prolipoproteins. This is Lipoprotein signal peptidase from Vibrio cholerae serotype O1 (strain ATCC 39315 / El Tor Inaba N16961).